Here is an 85-residue protein sequence, read N- to C-terminus: MVKIRLTRGGAKKRPFYHIIVTDVRSARDGRNIERLGYYNPVAQGAEPRIVLDVARVDHWVGNGAQLTDKVRNLYREAKSQAAAA.

This sequence belongs to the bacterial ribosomal protein bS16 family.

This Xanthomonas euvesicatoria pv. vesicatoria (strain 85-10) (Xanthomonas campestris pv. vesicatoria) protein is Small ribosomal subunit protein bS16.